An 87-amino-acid polypeptide reads, in one-letter code: Large ribosomal subunit protein bL27 (87 aa).

The tract at residues 1 to 23 (MAHKKGTGSTRNGRDSNAQRLGV) is disordered. Residues 7–19 (TGSTRNGRDSNAQ) show a composition bias toward polar residues.

It belongs to the bacterial ribosomal protein bL27 family.

This Synechocystis sp. (strain ATCC 27184 / PCC 6803 / Kazusa) protein is Large ribosomal subunit protein bL27 (rpmA).